Here is a 256-residue protein sequence, read N- to C-terminus: Type III pantothenate kinase (256 aa).

6–13 serves as a coordination point for ATP; that stretch reads DVGNSNIV. Substrate contacts are provided by residues Y100 and 107-110; that span reads GADR. Residue D109 is the Proton acceptor of the active site. D129 lines the K(+) pocket. T132 is a binding site for ATP. T184 contributes to the substrate binding site.

It belongs to the type III pantothenate kinase family. Homodimer. NH4(+) serves as cofactor. Requires K(+) as cofactor.

Its subcellular location is the cytoplasm. It catalyses the reaction (R)-pantothenate + ATP = (R)-4'-phosphopantothenate + ADP + H(+). It functions in the pathway cofactor biosynthesis; coenzyme A biosynthesis; CoA from (R)-pantothenate: step 1/5. Catalyzes the phosphorylation of pantothenate (Pan), the first step in CoA biosynthesis. The sequence is that of Type III pantothenate kinase from Geotalea uraniireducens (strain Rf4) (Geobacter uraniireducens).